Here is a 139-residue protein sequence, read N- to C-terminus: Putative nickel-responsive regulator (139 aa).

Ni(2+)-binding residues include His77, His88, His90, and Cys96.

Belongs to the transcriptional regulatory CopG/NikR family. Ni(2+) is required as a cofactor.

In terms of biological role, transcriptional regulator. The polypeptide is Putative nickel-responsive regulator (Haloarcula marismortui (strain ATCC 43049 / DSM 3752 / JCM 8966 / VKM B-1809) (Halobacterium marismortui)).